The following is a 195-amino-acid chain: Insertion element IS136 uncharacterized protein Atu4601 (195 aa).

In terms of domain architecture, Integrase catalytic spans 25–194 (MVMRSNLRWC…SPRQFIRAKS (170 aa)).

The chain is Insertion element IS136 uncharacterized protein Atu4601 from Agrobacterium fabrum (strain C58 / ATCC 33970) (Agrobacterium tumefaciens (strain C58)).